The primary structure comprises 145 residues: 3-hydroxyacyl-[acyl-carrier-protein] dehydratase FabZ (145 aa).

H48 is an active-site residue.

The protein belongs to the thioester dehydratase family. FabZ subfamily.

Its subcellular location is the cytoplasm. It carries out the reaction a (3R)-hydroxyacyl-[ACP] = a (2E)-enoyl-[ACP] + H2O. Its function is as follows. Involved in unsaturated fatty acids biosynthesis. Catalyzes the dehydration of short chain beta-hydroxyacyl-ACPs and long chain saturated and unsaturated beta-hydroxyacyl-ACPs. This chain is 3-hydroxyacyl-[acyl-carrier-protein] dehydratase FabZ, found in Marinomonas sp. (strain MWYL1).